A 276-amino-acid polypeptide reads, in one-letter code: Tryptophan synthase alpha chain (276 aa).

Catalysis depends on proton acceptor residues Glu-46 and Glu-57.

It belongs to the TrpA family. Tetramer of two alpha and two beta chains.

It catalyses the reaction (1S,2R)-1-C-(indol-3-yl)glycerol 3-phosphate + L-serine = D-glyceraldehyde 3-phosphate + L-tryptophan + H2O. It functions in the pathway amino-acid biosynthesis; L-tryptophan biosynthesis; L-tryptophan from chorismate: step 5/5. Its function is as follows. The alpha subunit is responsible for the aldol cleavage of indoleglycerol phosphate to indole and glyceraldehyde 3-phosphate. The sequence is that of Tryptophan synthase alpha chain from Halobacterium salinarum (strain ATCC 29341 / DSM 671 / R1).